Reading from the N-terminus, the 454-residue chain is Carbamoyl phosphate synthase arginine-specific small chain (454 aa).

Residues 1–29 (MMFSRFFKAVPARAPAFSSPLPVYQARTM) constitute a mitochondrion transit peptide. Residues 219 to 406 (HVAVLDCGVK…IDSVKKYKNS (188 aa)) form the Glutamine amidotransferase type-1 domain. Cys-295 serves as the catalytic Nucleophile. Catalysis depends on residues His-379 and Glu-381.

This sequence belongs to the CarA family. In terms of assembly, heterodimer composed of 2 chains; the small (or glutamine) chain promotes the hydrolysis of glutamine to ammonia, which is used by the large (or ammonia) chain to synthesize carbamoyl phosphate.

Its subcellular location is the mitochondrion matrix. It carries out the reaction hydrogencarbonate + L-glutamine + 2 ATP + H2O = carbamoyl phosphate + L-glutamate + 2 ADP + phosphate + 2 H(+). The catalysed reaction is L-glutamine + H2O = L-glutamate + NH4(+). It participates in amino-acid biosynthesis; L-arginine biosynthesis; carbamoyl phosphate from bicarbonate: step 1/1. Its function is as follows. Small subunit of the arginine-specific carbamoyl phosphate synthase (CPSase). CPSase catalyzes the formation of carbamoyl phosphate from the ammonia moiety of glutamine, carbonate, and phosphate donated by ATP, the first step of the arginine biosynthetic pathway. The small subunit (glutamine amidotransferase) binds and cleaves glutamine to supply the large subunit with the substrate ammonia. The chain is Carbamoyl phosphate synthase arginine-specific small chain (cpa-1) from Emericella nidulans (strain FGSC A4 / ATCC 38163 / CBS 112.46 / NRRL 194 / M139) (Aspergillus nidulans).